We begin with the raw amino-acid sequence, 593 residues long: DNA primase (593 aa).

The CHC2-type zinc finger occupies 40-64; that stretch reads CPFHHEKTPSFTVSQKKQFYHCFGC. Positions 260 to 342 constitute a Toprim domain; that stretch reads KQLLVVEGYM…GRQLKFIFLP (83 aa). Positions 266, 310, and 312 each coordinate Mg(2+).

This sequence belongs to the DnaG primase family. Monomer. Interacts with DnaB. Zn(2+) serves as cofactor. It depends on Mg(2+) as a cofactor.

It carries out the reaction ssDNA + n NTP = ssDNA/pppN(pN)n-1 hybrid + (n-1) diphosphate.. In terms of biological role, RNA polymerase that catalyzes the synthesis of short RNA molecules used as primers for DNA polymerase during DNA replication. The protein is DNA primase of Haemophilus influenzae (strain ATCC 51907 / DSM 11121 / KW20 / Rd).